Here is a 101-residue protein sequence, read N- to C-terminus: NADH-quinone oxidoreductase subunit K (101 aa).

3 helical membrane passes run 4 to 24 (LGHM…GIFL), 30 to 50 (IVLL…FVAF), and 62 to 82 (FVFF…AILV).

This sequence belongs to the complex I subunit 4L family. NDH-1 is composed of 14 different subunits. Subunits NuoA, H, J, K, L, M, N constitute the membrane sector of the complex.

The protein resides in the cell inner membrane. The catalysed reaction is a quinone + NADH + 5 H(+)(in) = a quinol + NAD(+) + 4 H(+)(out). Functionally, NDH-1 shuttles electrons from NADH, via FMN and iron-sulfur (Fe-S) centers, to quinones in the respiratory chain. The immediate electron acceptor for the enzyme in this species is believed to be ubiquinone. Couples the redox reaction to proton translocation (for every two electrons transferred, four hydrogen ions are translocated across the cytoplasmic membrane), and thus conserves the redox energy in a proton gradient. The polypeptide is NADH-quinone oxidoreductase subunit K (Stenotrophomonas maltophilia (strain R551-3)).